The following is a 239-amino-acid chain: Mannose-P-dolichol utilization defect 1 protein homolog 1 (239 aa).

6 consecutive transmembrane segments (helical) span residues 25-45 (CLLP…SMTV), 62-82 (LSVV…AYCL), 91-111 (FGEL…IYYF), 123-143 (AILY…PFLF), 174-194 (LSFL…FTSI), and 202-222 (MLLG…QILL). The 67-residue stretch at 27–93 (LPLISKLLGY…KDLPFSAFGE (67 aa)) folds into the PQ-loop 1 domain. Residues 150–205 (KHLIFLSARIPQIWKNFRNKSTGQLSFLTCLMNFGGALARVFTSIQEKAPLSMLLG) form the PQ-loop 2 domain.

Belongs to the MPDU1 (TC 2.A.43.3) family.

Its subcellular location is the membrane. The protein is Mannose-P-dolichol utilization defect 1 protein homolog 1 of Arabidopsis thaliana (Mouse-ear cress).